A 282-amino-acid polypeptide reads, in one-letter code: tRNA uridine(34) hydroxylase (282 aa).

Residues 128–222 form the Rhodanese domain; sequence DGRPVVMLDT…YFEEVGGSHY (95 aa). Residue Cys182 is the Cysteine persulfide intermediate of the active site.

Belongs to the TrhO family.

It carries out the reaction uridine(34) in tRNA + AH2 + O2 = 5-hydroxyuridine(34) in tRNA + A + H2O. Functionally, catalyzes oxygen-dependent 5-hydroxyuridine (ho5U) modification at position 34 in tRNAs. This chain is tRNA uridine(34) hydroxylase, found in Cupriavidus metallidurans (strain ATCC 43123 / DSM 2839 / NBRC 102507 / CH34) (Ralstonia metallidurans).